The chain runs to 517 residues: T-box transcription factor TBX5 (517 aa).

The interval 1–46 is disordered; that stretch reads MADADEGFGLARTPLEPDSKDRSCDSKPESALGAPSKSPSSPQAAF. Residues 15–28 are compositionally biased toward basic and acidic residues; that stretch reads LEPDSKDRSCDSKP. A compositionally biased stretch (low complexity) spans 34-45; the sequence is APSKSPSSPQAA. The segment at residues 58 to 238 is a DNA-binding region (T-box); sequence LHERELWLKF…NNPFAKGFRG (181 aa). 2 disordered regions span residues 270-313 and 331-369; these read HSPF…YPLA and SSTEHPYKKPYMETSPSEEDTFYRSGYPQQQGLSTSYRT. Polar residues predominate over residues 271–300; that stretch reads SPFSSETRALSTSSNLGSQYQCENGVSGPS. An N6-acetyllysine modification is found at K338. The segment covering 357 to 369 has biased composition (polar residues); that stretch reads YPQQQGLSTSYRT.

As to quaternary structure, monomer. Homodimer (via the T-box); binds DNA as homodimer. Interacts (via the T-box) with NKX2-5 (via the homeobox); this complex binds DNA. Interacts with GATA4. Interacts with KAT2A and KAT2B. Acetylation at Lys-338 by KAT2A and KAT2B promotes nuclear retention.

It localises to the nucleus. The protein resides in the cytoplasm. Its function is as follows. DNA-binding protein that regulates the transcription of several genes and is involved in heart development and limb pattern formation. Binds to the core DNA motif of NPPA promoter. This is T-box transcription factor TBX5 (Tbx5) from Rattus norvegicus (Rat).